We begin with the raw amino-acid sequence, 64 residues long: Translational regulator CsrA (64 aa).

This sequence belongs to the CsrA/RsmA family. As to quaternary structure, homodimer; the beta-strands of each monomer intercalate to form a hydrophobic core, while the alpha-helices form wings that extend away from the core.

The protein resides in the cytoplasm. Functionally, a key translational regulator that binds mRNA to regulate translation initiation and/or mRNA stability. Mediates global changes in gene expression, shifting from rapid growth to stress survival by linking envelope stress, the stringent response and the catabolite repression systems. Usually binds in the 5'-UTR; binding at or near the Shine-Dalgarno sequence prevents ribosome-binding, repressing translation, binding elsewhere in the 5'-UTR can activate translation and/or stabilize the mRNA. Its function is antagonized by small RNA(s). The protein is Translational regulator CsrA of Methylococcus capsulatus (strain ATCC 33009 / NCIMB 11132 / Bath).